Here is a 177-residue protein sequence, read N- to C-terminus: ATP synthase subunit delta (177 aa).

This sequence belongs to the ATPase delta chain family. In terms of assembly, F-type ATPases have 2 components, F(1) - the catalytic core - and F(0) - the membrane proton channel. F(1) has five subunits: alpha(3), beta(3), gamma(1), delta(1), epsilon(1). F(0) has three main subunits: a(1), b(2) and c(10-14). The alpha and beta chains form an alternating ring which encloses part of the gamma chain. F(1) is attached to F(0) by a central stalk formed by the gamma and epsilon chains, while a peripheral stalk is formed by the delta and b chains.

It is found in the cell inner membrane. In terms of biological role, f(1)F(0) ATP synthase produces ATP from ADP in the presence of a proton or sodium gradient. F-type ATPases consist of two structural domains, F(1) containing the extramembraneous catalytic core and F(0) containing the membrane proton channel, linked together by a central stalk and a peripheral stalk. During catalysis, ATP synthesis in the catalytic domain of F(1) is coupled via a rotary mechanism of the central stalk subunits to proton translocation. Functionally, this protein is part of the stalk that links CF(0) to CF(1). It either transmits conformational changes from CF(0) to CF(1) or is implicated in proton conduction. The chain is ATP synthase subunit delta from Shigella dysenteriae serotype 1 (strain Sd197).